The following is a 251-amino-acid chain: Phosphate import ATP-binding protein PstB 2 (251 aa).

The ABC transporter domain occupies 5–246 (ISAKDVHLSY…PKKQITSDYL (242 aa)). 37–44 (GPSGCGKS) is an ATP binding site.

It belongs to the ABC transporter superfamily. Phosphate importer (TC 3.A.1.7) family. In terms of assembly, the complex is composed of two ATP-binding proteins (PstB), two transmembrane proteins (PstC and PstA) and a solute-binding protein (PstS).

The protein localises to the cell membrane. It carries out the reaction phosphate(out) + ATP + H2O = ADP + 2 phosphate(in) + H(+). Functionally, part of the ABC transporter complex PstSACB involved in phosphate import. Responsible for energy coupling to the transport system. This Lactobacillus acidophilus (strain ATCC 700396 / NCK56 / N2 / NCFM) protein is Phosphate import ATP-binding protein PstB 2.